Consider the following 134-residue polypeptide: (R)-specific enoyl-CoA hydratase (134 aa).

The region spanning 5–119 (SLEVGQKARL…ATLTTRIFTQ (115 aa)) is the MaoC-like domain. A (3R)-3-hydroxyacyl-CoA is bound by residues 32–37 (DFNPLH), Gly55, and Phe84.

Homodimer.

It carries out the reaction a (3R)-3-hydroxyacyl-CoA = a (2E)-enoyl-CoA + H2O. Functionally, catalyzes the hydration of trans-2-enoyl-CoA with a chain-length of 4-6 carbon atoms, forming the corresponding (3R)-3-hydroxyacyl-CoA. The polypeptide is (R)-specific enoyl-CoA hydratase (phaJ) (Aeromonas caviae (Aeromonas punctata)).